The primary structure comprises 353 residues: tRNA-specific 2-thiouridylase MnmA 1 (353 aa).

ATP-binding positions include 9 to 16 and Met35; that span reads AMSGGVDS. Cys98 acts as the Nucleophile in catalysis. Cys98 and Cys194 are joined by a disulfide. Gly122 contributes to the ATP binding site. The interaction with tRNA stretch occupies residues 144–146; it reads KDQ. Catalysis depends on Cys194, which acts as the Cysteine persulfide intermediate. Positions 300 to 301 are interaction with tRNA; that stretch reads RY.

The protein belongs to the MnmA/TRMU family.

The protein resides in the cytoplasm. It carries out the reaction S-sulfanyl-L-cysteinyl-[protein] + uridine(34) in tRNA + AH2 + ATP = 2-thiouridine(34) in tRNA + L-cysteinyl-[protein] + A + AMP + diphosphate + H(+). Functionally, catalyzes the 2-thiolation of uridine at the wobble position (U34) of tRNA, leading to the formation of s(2)U34. This is tRNA-specific 2-thiouridylase MnmA 1 from Clostridium botulinum (strain Okra / Type B1).